The sequence spans 409 residues: MLIDYLNHQLREREAQGLTRQRRIAESPCAPRQRVSQRGQPARDLLAFCSNDYLGLANHPALVRALAEGAQLYGAGSGASHLISGHSEAHAALEADLAAWLAPCIPNAQALYFCTGYMANLALLTALGGANATIFADKLNHASLVDGALLAKATLQRYAHKSLAVLARQLAACDTPIKLIVTDAVFSMDGDVADLPELLALAERFDAWLVVDDAHGFGVLGEEGRGSLSHFGLCSERLICMGTLGKAAGVGGAFVAAHPSIIDWLVQTARPYIYTTAAPPAVAHALRESLRLIGGTEGDQRRKQLQQLISQLRSQLAELIAAQPALGWHLADSSTAIQPLIVGSNEAALALAAALDAQGLWVPAIRPPTVPAGTARLRITLSASHSADDVRQLVDALAQAGKDLAGAQP.

Residue arginine 20 participates in substrate binding. A pyridoxal 5'-phosphate-binding site is contributed by glycine 116–tyrosine 117. Histidine 141 is a binding site for substrate. Positions 187, 215, and 243 each coordinate pyridoxal 5'-phosphate. Lysine 246 is modified (N6-(pyridoxal phosphate)lysine). Threonine 369 serves as a coordination point for substrate.

The protein belongs to the class-II pyridoxal-phosphate-dependent aminotransferase family. BioF subfamily. As to quaternary structure, homodimer. Pyridoxal 5'-phosphate is required as a cofactor.

The enzyme catalyses 6-carboxyhexanoyl-[ACP] + L-alanine + H(+) = (8S)-8-amino-7-oxononanoate + holo-[ACP] + CO2. The protein operates within cofactor biosynthesis; biotin biosynthesis. In terms of biological role, catalyzes the decarboxylative condensation of pimeloyl-[acyl-carrier protein] and L-alanine to produce 8-amino-7-oxononanoate (AON), [acyl-carrier protein], and carbon dioxide. The protein is 8-amino-7-oxononanoate synthase of Polaromonas naphthalenivorans (strain CJ2).